A 428-amino-acid chain; its full sequence is Spliceosome RNA helicase DDX39B (428 aa).

Residues 1–19 (MAENDVDNELLDYEDDEVE) show a composition bias toward acidic residues. The interval 1–31 (MAENDVDNELLDYEDDEVETAAGGDGAEAPA) is disordered. Ala2 carries the N-acetylalanine modification. Lys36 is subject to N6-acetyllysine; alternate. Lys36 participates in a covalent cross-link: Glycyl lysine isopeptide (Lys-Gly) (interchain with G-Cter in SUMO2); alternate. Phosphoserine is present on residues Ser38 and Ser41. The short motif at 45 to 73 (SGFRDFLLKPELLRAIVDCGFEHPSEVQH) is the Q motif element. Positions 76–249 (IPQAILGMDV…RKFMQDPMEI (174 aa)) constitute a Helicase ATP-binding domain. 89–96 (AKSGMGKT) contributes to the ATP binding site. Thr172 bears the Phosphothreonine mark. The DECD box signature appears at 196-199 (DECD). A Helicase C-terminal domain is found at 261–422 (GLQQYYVKLK…ELPDEIDISS (162 aa)).

It belongs to the DEAD box helicase family. DECD subfamily. Homodimer, and heterodimer with DDX39A. DDX39B interacts with the THO subcomplex to form the THO-DDX39B complex which multimerizes into a 28-subunit tetrameric assembly. Component of the transcription/export (TREX) complex at least composed of ALYREF/THOC4, DDX39B, SARNP/CIP29, CHTOP and the THO subcomplex; in the complex interacts with THOC2. THOC1-THOC2-THOC3-DDX39B subcomplex is sufficient for the interaction with export factor NXF1-NXT1. TREX seems to have a dynamic structure involving ATP-dependent remodeling. Within the TREX complex bridges ALYREF/THOC4 and the THO subcomplex, and, in a ATP-dependent manner, ALYREF/THOC4 and SARNP/CIP29. Component of the spliceosome. Interacts directly with U2AF2. Interacts with RBM8A, RNPS1 and SRRM1, FYTTD1/UIF, THOC1, MX1 and POLDIP3. Interacts with LUZP4. Interacts with SARNP/CIP29 (via the C-terminal domain); the interaction is direct and facilitates RNA binding of DDX39B.

It is found in the nucleus. The protein localises to the nucleus speckle. It localises to the cytoplasm. It catalyses the reaction ATP + H2O = ADP + phosphate + H(+). Involved in nuclear export of spliced and unspliced mRNA. Component of the TREX complex which is thought to couple mRNA transcription, processing and nuclear export, and specifically associates with spliced mRNA and not with unspliced pre-mRNA. The TREX complex is recruited to spliced mRNAs by a transcription-independent mechanism, binds to mRNA upstream of the exon-junction complex (EJC) and is recruited in a splicing- and cap-dependent manner to a region near the 5' end of the mRNA where it functions in mRNA export to the cytoplasm via the TAP/NXF1 pathway. The THOC1-THOC2-THOC3 core complex alone is sufficient to promote ATPase activity of DDX39B; in the complex THOC2 is the only component that directly interacts with DDX39B. Associates with SARNP/CIP29, which facilitates RNA binding of DDX39B and likely plays a role in mRNA export. May undergo several rounds of ATP hydrolysis during assembly of TREX to drive subsequent loading of components such as ALYREF/THOC4 and CHTOP onto mRNA. Also associates with pre-mRNA independent of ALYREF/THOC4. Involved in the nuclear export of intronless mRNA; the ATP-bound form is proposed to recruit export adapter ALYREF/THOC4 to intronless mRNA; its ATPase activity is cooperatively stimulated by RNA and ALYREF/THOC4 and ATP hydrolysis is thought to trigger the dissociation from RNA to allow the association of ALYREF/THOC4 and the NXF1-NXT1 heterodimer. Involved in transcription elongation and genome stability. In terms of biological role, splice factor that is required for the first ATP-dependent step in spliceosome assembly and for the interaction of U2 snRNP with the branchpoint. Has both RNA-stimulated ATP binding/hydrolysis activity and ATP-dependent RNA unwinding activity. Even with the stimulation of RNA, the ATPase activity is weak. Can only hydrolyze ATP but not other NTPs. The RNA stimulation of ATPase activity does not have a strong preference for the sequence and length of the RNA. However, ssRNA stimulates the ATPase activity much more strongly than dsRNA. Can unwind 5' or 3' overhangs or blunt end RNA duplexes in vitro. The ATPase and helicase activities are not influenced by U2AF2; the effect of ALYREF/THOC4 is reported conflictingly. The chain is Spliceosome RNA helicase DDX39B (DDX39B) from Bos taurus (Bovine).